We begin with the raw amino-acid sequence, 724 residues long: NAD(+) hydrolase SARM1 (724 aa).

Residues 1–27 (MVLTLLFSAYKLCRFFIMSGPRPGADR) constitute a mitochondrion transit peptide. Residues 60-100 (EVQGALERSLPELQQALSELKQASAAQAVGAGLAEVFQLVE) form an ARM 1 repeat. Residues Trp-103, Arg-110, 149 to 157 (EQILVAENR), and 190 to 193 (HMFK) each bind NAD(+). ARM repeat units lie at residues 114-153 (QGLC…QILV), 155-193 (ENRD…HMFK), 196-235 (EETC…NCAL), 237-280 (GGQT…LATN), 281-314 (KEVE…CLVD), 315-354 (ASDT…AEAA), and 359-402 (QGKT…EEVP). 2 SAM domains span residues 412–476 (WKEA…LKTF) and 486–548 (NLAD…MLHS). Residues Ser-548 and Ser-558 each carry the phosphoserine modification. Positions 560 to 703 (DTPDVFISYR…KIIRFLQGRP (144 aa)) constitute a TIR domain. NAD(+) is bound by residues 569–570 (RR) and Glu-599. Residue Glu-642 is part of the active site. Residues 703–717 (PSQDSSAGSDTSLEG) show a composition bias toward polar residues. The interval 703–724 (PSQDSSAGSDTSLEGATSMGLP) is disordered.

The protein belongs to the SARM1 family. Homooctamer; forms an octameric ring via SAM domains. Interacts with TICAM1/TRIF and thereby interferes with TICAM1/TRIF function. Interacts with MAPK10/JNK3 and SDC2 (via cytoplasmic domain). Phosphorylation at Ser-548 by JNK kinases (MAPK8, MAPK9 and /or MAPK10) enhance the NAD(+) hydrolase (NADase) activity. Phosphorylation at Ser-548 and subsequent activation takes place in response to oxidative stress conditions and inhibits mitochondrial respiration. Phosphorylation at Ser-548 increases in response to cerebral ischemia/reperfusion (I/R) injury.

It localises to the cytoplasm. It is found in the cell projection. Its subcellular location is the axon. The protein localises to the dendrite. The protein resides in the synapse. It localises to the mitochondrion. It catalyses the reaction NAD(+) + H2O = ADP-D-ribose + nicotinamide + H(+). The enzyme catalyses NAD(+) = cyclic ADP-beta-D-ribose + nicotinamide + H(+). The catalysed reaction is NADP(+) + H2O = ADP-D-ribose 2'-phosphate + nicotinamide + H(+). Autoinhibited: in the inactive state, the enzymatic TIR domain is held apart by the autoinhibiting ARM repeats. NAD(+)-binding to ARM repeats maintains an inactive state by promoting interaction between ARM repeats and the TIR domain, thereby facilitating inhibition of the enzymatic TIR domain. Following activation, possibly by nicotinamide mononucleotide (NMN), auto-inhibitory interactions are released, allowing self-association of the TIR domains and subsequent activation of the NAD(+) hydrolase (NADase) activity. Self-association of TIR domains is facilitated by the octamer of SAM domains. In terms of biological role, NAD(+) hydrolase, which plays a key role in axonal degeneration following injury by regulating NAD(+) metabolism. Acts as a negative regulator of MYD88- and TRIF-dependent toll-like receptor signaling pathway by promoting Wallerian degeneration, an injury-induced form of programmed subcellular death which involves degeneration of an axon distal to the injury site. Wallerian degeneration is triggered by NAD(+) depletion: in response to injury, SARM1 is activated and catalyzes cleavage of NAD(+) into ADP-D-ribose (ADPR), cyclic ADPR (cADPR) and nicotinamide; NAD(+) cleavage promoting cytoskeletal degradation and axon destruction. Also able to hydrolyze NADP(+), but not other NAD(+)-related molecules. Can activate neuronal cell death in response to stress. Regulates dendritic arborization through the MAPK4-JNK pathway. Involved in innate immune response: inhibits both TICAM1/TRIF- and MYD88-dependent activation of JUN/AP-1, TRIF-dependent activation of NF-kappa-B and IRF3, and the phosphorylation of MAPK14/p38. The protein is NAD(+) hydrolase SARM1 of Rattus norvegicus (Rat).